The chain runs to 709 residues: Polyribonucleotide nucleotidyltransferase (709 aa).

Mg(2+) is bound by residues D489 and D495. The 60-residue stretch at 556-615 (PKIDMIKIDVDKIKVVIGKGGETIDKIIAETGVKIDIDEEGNVSIFSSDQAAIDRTKDII) folds into the KH domain. Residues 625–693 (GEVYHAKVVR…DKGRVDASMK (69 aa)) form the S1 motif domain.

It belongs to the polyribonucleotide nucleotidyltransferase family. It depends on Mg(2+) as a cofactor.

Its subcellular location is the cytoplasm. The enzyme catalyses RNA(n+1) + phosphate = RNA(n) + a ribonucleoside 5'-diphosphate. In terms of biological role, involved in mRNA degradation. Catalyzes the phosphorolysis of single-stranded polyribonucleotides processively in the 3'- to 5'-direction. In Streptococcus agalactiae serotype Ia (strain ATCC 27591 / A909 / CDC SS700), this protein is Polyribonucleotide nucleotidyltransferase.